We begin with the raw amino-acid sequence, 110 residues long: Envelope glycoprotein N (110 aa).

The first 17 residues, 1–17 (MTASTVALALFVASILG), serve as a signal peptide directing secretion. The Virion surface portion of the chain corresponds to 18 to 80 (HCWVTANSTG…SLSSFSSVWA (63 aa)). The span at 28–41 (VASSTERSSPSTAG) shows a compositional bias: polar residues. Residues 28–51 (VASSTERSSPSTAGLSARPSPGPT) are disordered. Residues 81 to 101 (LINALLVVVATFFYLVYLCFF) form a helical membrane-spanning segment. The Intravirion segment spans residues 102 to 110 (KFVDEVVHA).

This sequence belongs to the herpesviridae glycoprotein N family. In terms of assembly, interacts (via N-terminus) with gM (via N-terminus). The gM-gN heterodimer forms the gCII complex. O-glycosylated. Contains alpha 2,6-sialic acid residues. N-glycosylated.

The protein resides in the virion membrane. It localises to the host membrane. It is found in the host Golgi apparatus. The protein localises to the host trans-Golgi network. Envelope glycoprotein necessary for proper maturation of gM and modulation of its membrane fusion activity. Also plays a critical role in virion morphogenesis. This is Envelope glycoprotein N from Homo sapiens (Human).